Consider the following 127-residue polypeptide: Protein SPIRAL1-like 4 (127 aa).

The tract at residues 1 to 127 (MGKARGVNSG…FGSGPCGSDK (127 aa)) is disordered. Low complexity predominate over residues 39 to 48 (TTTTTTTTTT). At Ser80 the chain carries Phosphoserine. Positions 80-94 (SPNNYYRSDGQNCGN) are enriched in polar residues.

This sequence belongs to the SPIRAL1 family. Ubiquitous.

Its function is as follows. Acts redundantly with SPR1 in maintaining the cortical microtubules organization essential for anisotropic cell growth. This chain is Protein SPIRAL1-like 4 (SP1L4), found in Arabidopsis thaliana (Mouse-ear cress).